We begin with the raw amino-acid sequence, 111 residues long: Ig kappa chain V-III region CBPC 101 (111 aa).

The tract at residues 1–23 is framework-1; that stretch reads DIVLTQSPASLAVSLGQRATISC. C23 and C92 form a disulfide bridge. Residues 24–38 form a complementarity-determining-1 region; sequence KASQSVDYTGESYMN. The segment at 39 to 53 is framework-2; it reads WYQQNPGQSPKLLIY. The complementarity-determining-2 stretch occupies residues 54 to 60; that stretch reads AASNLES. Residues 61–92 are framework-3; the sequence is GIPARFSGSGSGTDFTLNIHPVEEEDAATYYC. The tract at residues 93 to 101 is complementarity-determining-3; sequence QQSNEDPYT. Positions 102 to 111 are framework-4; it reads FGGGTKLEIK.

The chain is Ig kappa chain V-III region CBPC 101 from Mus musculus (Mouse).